The primary structure comprises 804 residues: Phenylalanine--tRNA ligase beta subunit (804 aa).

The 122-residue stretch at 40-161 (FSMIDYLIIG…KANLGDTEVY (122 aa)) folds into the tRNA-binding domain. Residues 413-486 (EYHQQVKVNY…KILNINLFQP (74 aa)) enclose the B5 domain. Mg(2+) is bound by residues Asp-464, Asp-470, Glu-473, and Glu-474. The FDX-ACB domain occupies 710-804 (DHYQEVTRDI…DLMKTKQILI (95 aa)).

The protein belongs to the phenylalanyl-tRNA synthetase beta subunit family. Type 1 subfamily. In terms of assembly, tetramer of two alpha and two beta subunits. It depends on Mg(2+) as a cofactor.

It is found in the cytoplasm. It carries out the reaction tRNA(Phe) + L-phenylalanine + ATP = L-phenylalanyl-tRNA(Phe) + AMP + diphosphate + H(+). This Mycoplasmoides gallisepticum (strain R(low / passage 15 / clone 2)) (Mycoplasma gallisepticum) protein is Phenylalanine--tRNA ligase beta subunit.